A 418-amino-acid polypeptide reads, in one-letter code: MDQNLSGLDCLSEPDEKRWPDGKRKRKNSQCMGKSGMSGDSSVSLLSAGYIPSYLTKDEPCVVCSDKATGYHYRCITCEGCKGFFRRTIQKNLHPSYSCKYDGCCIIDKITRNQCQLCRFKKCIAVGMAMDLVLDDSKRVAKRKLIEENRERRRKEEMIKTLQQRPEPSSEEWELIRIVTEAHRSTNAQGSHWKQRRKFLPEDIGQNPMASMPDSDKVDLEAFSEFTKIITPAITRVVDFAKKLPMFSELPCEDQIILLKGCCMEIMSLRAAVRYDPDSETLTLSGEMAVKREQLKNGGLGVVSDAIFDLGRSLSAFNLDDTEVALLQAVLLMSSDRTGLICTDKIEKCQETYLLAFEHYINHRKHNIPHFWPKLLMKVTDLRMIGACHASRFLHMKVECPTELFPPLFLEVFEDQEV.

Residues 1-41 (MDQNLSGLDCLSEPDEKRWPDGKRKRKNSQCMGKSGMSGDS) form a disordered region. The interval 1-60 (MDQNLSGLDCLSEPDEKRWPDGKRKRKNSQCMGKSGMSGDSSVSLLSAGYIPSYLTKDEP) is modulating. The Zn(2+) site is built by Cys61, Cys64, Cys78, Cys81, Cys99, Cys105, Cys115, and Cys118. NR C4-type zinc fingers lie at residues 61–81 (CVVCSDKATGYHYRCITCEGC) and 99–123 (CKYDGCCIIDKITRNQCQLCRFKKC). Residues 61–135 (CVVCSDKATG…VGMAMDLVLD (75 aa)) constitute a DNA-binding region (nuclear receptor). Residues 171–415 (EEWELIRIVT…PPLFLEVFED (245 aa)) enclose the NR LBD domain. 3,3',5-triiodo-L-thyronine-binding residues include Arg236 and Ser285.

The protein belongs to the nuclear hormone receptor family. NR1 subfamily. In terms of tissue distribution, highest level of expression in erythrocytes. Also expressed in liver, tail, eye, muscle and skin.

The protein localises to the nucleus. Nuclear hormone receptor that can act as a repressor or activator of transcription. High affinity receptor for thyroid hormones, including triiodothyronine and thyroxine. The polypeptide is Thyroid hormone receptor alpha (thra) (Aquarana catesbeiana (American bullfrog)).